A 206-amino-acid chain; its full sequence is Small ribosomal subunit protein uS4 (206 aa).

The S4 RNA-binding domain occupies 96–156 (SRLDNVVYRM…EKSKKQVRIA (61 aa)).

The protein belongs to the universal ribosomal protein uS4 family. Part of the 30S ribosomal subunit. Contacts protein S5. The interaction surface between S4 and S5 is involved in control of translational fidelity.

Functionally, one of the primary rRNA binding proteins, it binds directly to 16S rRNA where it nucleates assembly of the body of the 30S subunit. Its function is as follows. With S5 and S12 plays an important role in translational accuracy. The sequence is that of Small ribosomal subunit protein uS4 from Laribacter hongkongensis (strain HLHK9).